The following is a 383-amino-acid chain: Carbamoyl phosphate synthase small chain (383 aa).

The segment at 1 to 190 (MPHPSSRQAH…FDQRLKQHPD (190 aa)) is CPSase. Residues serine 51, glycine 242, and glycine 244 each coordinate L-glutamine. The Glutamine amidotransferase type-1 domain occupies 194 to 381 (RVVAIDFGIK…VALMADRRDV (188 aa)). Cysteine 271 (nucleophile) is an active-site residue. Residues leucine 272, glutamine 275, asparagine 311, glycine 313, and phenylalanine 314 each coordinate L-glutamine. Active-site residues include histidine 354 and glutamate 356.

Belongs to the CarA family. Composed of two chains; the small (or glutamine) chain promotes the hydrolysis of glutamine to ammonia, which is used by the large (or ammonia) chain to synthesize carbamoyl phosphate. Tetramer of heterodimers (alpha,beta)4.

It catalyses the reaction hydrogencarbonate + L-glutamine + 2 ATP + H2O = carbamoyl phosphate + L-glutamate + 2 ADP + phosphate + 2 H(+). The enzyme catalyses L-glutamine + H2O = L-glutamate + NH4(+). It functions in the pathway amino-acid biosynthesis; L-arginine biosynthesis; carbamoyl phosphate from bicarbonate: step 1/1. The protein operates within pyrimidine metabolism; UMP biosynthesis via de novo pathway; (S)-dihydroorotate from bicarbonate: step 1/3. Small subunit of the glutamine-dependent carbamoyl phosphate synthetase (CPSase). CPSase catalyzes the formation of carbamoyl phosphate from the ammonia moiety of glutamine, carbonate, and phosphate donated by ATP, constituting the first step of 2 biosynthetic pathways, one leading to arginine and/or urea and the other to pyrimidine nucleotides. The small subunit (glutamine amidotransferase) binds and cleaves glutamine to supply the large subunit with the substrate ammonia. The sequence is that of Carbamoyl phosphate synthase small chain from Parasynechococcus marenigrum (strain WH8102).